The chain runs to 331 residues: NADH-quinone oxidoreductase subunit H (331 aa).

8 helical membrane passes run 7-27 (ALVT…AVVI), 81-101 (MIFT…FAIV), 114-134 (IGIL…LFAG), 154-174 (ISYE…VGSF), 187-207 (VWFI…GVAV), 238-258 (FFVG…TLFF), 271-291 (WLSF…FILI), and 310-330 (VCLP…LAAA).

Belongs to the complex I subunit 1 family. As to quaternary structure, NDH-1 is composed of 13 different subunits. Subunits NuoA, H, J, K, L, M, N constitute the membrane sector of the complex.

The protein localises to the cell inner membrane. It catalyses the reaction a quinone + NADH + 5 H(+)(in) = a quinol + NAD(+) + 4 H(+)(out). Its function is as follows. NDH-1 shuttles electrons from NADH, via FMN and iron-sulfur (Fe-S) centers, to quinones in the respiratory chain. The immediate electron acceptor for the enzyme in this species is believed to be ubiquinone. Couples the redox reaction to proton translocation (for every two electrons transferred, four hydrogen ions are translocated across the cytoplasmic membrane), and thus conserves the redox energy in a proton gradient. This subunit may bind ubiquinone. This Pseudomonas paraeruginosa (strain DSM 24068 / PA7) (Pseudomonas aeruginosa (strain PA7)) protein is NADH-quinone oxidoreductase subunit H.